Reading from the N-terminus, the 374-residue chain is ORC1-type DNA replication protein 6 (374 aa).

ATP is bound by residues 66 to 70 (TGKTT), Tyr209, and Arg221.

Belongs to the CDC6/cdc18 family.

In terms of biological role, involved in regulation of DNA replication. This is ORC1-type DNA replication protein 6 (orc6) from Halobacterium salinarum (strain ATCC 700922 / JCM 11081 / NRC-1) (Halobacterium halobium).